We begin with the raw amino-acid sequence, 118 residues long: MRNKYIEAFENAQISNKNVPDFRAGDTLKLAIRIKEGEKTRIQNFEGICIARRGSGVGETFIVRKIGANGIGVERIFPIYSESLENIEVLRKGNVRRSKLFYLRDRRGKAAKIKELRK.

The protein belongs to the bacterial ribosomal protein bL19 family.

In terms of biological role, this protein is located at the 30S-50S ribosomal subunit interface and may play a role in the structure and function of the aminoacyl-tRNA binding site. The protein is Large ribosomal subunit protein bL19 of Campylobacter hominis (strain ATCC BAA-381 / DSM 21671 / CCUG 45161 / LMG 19568 / NCTC 13146 / CH001A).